Reading from the N-terminus, the 86-residue chain is Large ribosomal subunit protein bL27 (86 aa).

A disordered region spans residues 1–26 (MAHKKAAGSTRNGRDSESKRLGVKRY).

This sequence belongs to the bacterial ribosomal protein bL27 family.

This Marinobacter nauticus (strain ATCC 700491 / DSM 11845 / VT8) (Marinobacter aquaeolei) protein is Large ribosomal subunit protein bL27.